Consider the following 609-residue polypeptide: UvrABC system protein C (609 aa).

One can recognise a GIY-YIG domain in the interval 15 to 92; the sequence is TGSGVYQMQD…IKQFRPRYNV (78 aa). Positions 202-237 constitute a UVR domain; sequence DQVIIKLTERMEVASENLVFEEAAHYRDQIRQLRRL.

Belongs to the UvrC family. Interacts with UvrB in an incision complex.

The protein resides in the cytoplasm. Its function is as follows. The UvrABC repair system catalyzes the recognition and processing of DNA lesions. UvrC both incises the 5' and 3' sides of the lesion. The N-terminal half is responsible for the 3' incision and the C-terminal half is responsible for the 5' incision. The polypeptide is UvrABC system protein C (Coxiella burnetii (strain CbuG_Q212) (Coxiella burnetii (strain Q212))).